A 682-amino-acid polypeptide reads, in one-letter code: TBC1 domain family member 23 (682 aa).

The 182-residue stretch at 29-210 (PVPCDLRTKV…AIWDNYLQQA (182 aa)) folds into the Rab-GAP TBC domain. The Rhodanese domain maps to 318 to 426 (DGVRFFVVDC…GFMALQQHLA (109 aa)).

It is found in the golgi apparatus. It localises to the trans-Golgi network. The protein resides in the cytoplasmic vesicle. In terms of biological role, putative Rab GTPase-activating protein which plays a role in vesicular trafficking. Involved in endosome-to-Golgi trafficking. Acts as a bridging protein by binding simultaneously to golgins, located at the trans-Golgi, and to the WASH complex, located on endosome-derived vesicles. Plays a role in brain development. May act as a general inhibitor of innate immunity signaling. The polypeptide is TBC1 domain family member 23 (tbc1d23) (Xenopus laevis (African clawed frog)).